A 58-amino-acid chain; its full sequence is uncharacterized protein (58 aa).

A run of 2 helical transmembrane segments spans residues I5–E25 and W32–I52.

Its subcellular location is the cell membrane. This is an uncharacterized protein from Methanocaldococcus jannaschii (strain ATCC 43067 / DSM 2661 / JAL-1 / JCM 10045 / NBRC 100440) (Methanococcus jannaschii).